Here is a 202-residue protein sequence, read N- to C-terminus: Prostamide/prostaglandin F synthase (202 aa).

Tyr108 is modified (phosphotyrosine).

It belongs to the peroxiredoxin-like PRXL2 family. Prostamide/prostaglandin F synthase subfamily.

Its subcellular location is the cytoplasm. The protein resides in the cytosol. The enzyme catalyses prostaglandin H2 + [thioredoxin]-dithiol = prostaglandin F2alpha + [thioredoxin]-disulfide. It carries out the reaction prostamide F2alpha + [thioredoxin]-disulfide = prostamide H2 + [thioredoxin]-dithiol. In terms of biological role, catalyzes the reduction of prostaglandin-ethanolamide H(2) (prostamide H(2)) to prostamide F(2alpha) with NADPH as proton donor. Also able to reduce prostaglandin H(2) to prostaglandin F(2alpha). This chain is Prostamide/prostaglandin F synthase (PRXL2B), found in Sus scrofa (Pig).